The sequence spans 898 residues: Magnesium-transporting ATPase, P-type 1 (898 aa).

Topologically, residues 1–94 (MFKEIFTRLI…QPSPWWVHLW (94 aa)) are cytoplasmic. A helical membrane pass occupies residues 95–115 (VCYRNPFNILLTILGAISYAT). Position 116 (E116) is a topological domain, extracellular. Residues 117–137 (DLFAAGVIALMVAISTLLNFI) form a helical membrane-spanning segment. Residues 138–287 (QEARSTKAAD…PNAFQQGISR (150 aa)) lie on the Cytoplasmic side of the membrane. A helical transmembrane segment spans residues 288–308 (VSMLLIRFMLVMAPVVLLING). The Extracellular portion of the chain corresponds to 309 to 317 (YTKGDWWEA). Residues 318–335 (ALFALSVAVGLTPEMLPM) traverse the membrane as a helical segment. E331 is a Mg(2+) binding site. At 336-695 (IVTSTLARGA…IEGRRTFANM (360 aa)) the chain is on the cytoplasmic side. D373 acts as the 4-aspartylphosphate intermediate in catalysis. Residues D641, D645, and N709 each contribute to the Mg(2+) site. A helical membrane pass occupies residues 696 to 715 (LKYIKMTASSNFGNVFSVLV). Topologically, residues 716–724 (ASAFLPFLP) are extracellular. The chain crosses the membrane as a helical span at residues 725-744 (MLPLHLLIQNLLYDVSQVAI). Positions 734 and 738 each coordinate Mg(2+). Topologically, residues 745 to 766 (PFDNVDDEQIQKPQRWNPADLG) are cytoplasmic. The helical transmembrane segment at 767–790 (RFMIFFGPISSIFDILTFCLMWWV) threads the bilayer. Residues 791–799 (FHANTPETQ) are Extracellular-facing. The helical transmembrane segment at 800-818 (TLFQSGWFVVGLLSQTLIV) threads the bilayer. At 819–831 (HMIRTRRVPFIQS) the chain is on the cytoplasmic side. The chain crosses the membrane as a helical span at residues 832 to 851 (CASWPLMIMTVIVMIVGIAL). Topologically, residues 852–866 (PFSPLASYLQLQALP) are extracellular. Residues 867 to 886 (LSYFPWLVAILAGYMTLTQL) traverse the membrane as a helical segment. At 887–898 (VKGFYSRRYGWQ) the chain is on the cytoplasmic side.

The protein belongs to the cation transport ATPase (P-type) (TC 3.A.3) family. Type IIIB subfamily.

The protein resides in the cell inner membrane. It catalyses the reaction Mg(2+)(out) + ATP + H2O = Mg(2+)(in) + ADP + phosphate + H(+). Functionally, mediates magnesium influx to the cytosol. The polypeptide is Magnesium-transporting ATPase, P-type 1 (mgtA) (Escherichia coli O157:H7).